A 152-amino-acid polypeptide reads, in one-letter code: Deoxyuridine 5'-triphosphate nucleotidohydrolase (152 aa).

Substrate contacts are provided by residues 72 to 74 (RSG), asparagine 85, and 89 to 91 (TVD).

It belongs to the dUTPase family. The cofactor is Mg(2+).

It catalyses the reaction dUTP + H2O = dUMP + diphosphate + H(+). It participates in pyrimidine metabolism; dUMP biosynthesis; dUMP from dCTP (dUTP route): step 2/2. This enzyme is involved in nucleotide metabolism: it produces dUMP, the immediate precursor of thymidine nucleotides and it decreases the intracellular concentration of dUTP so that uracil cannot be incorporated into DNA. The protein is Deoxyuridine 5'-triphosphate nucleotidohydrolase of Nitrobacter winogradskyi (strain ATCC 25391 / DSM 10237 / CIP 104748 / NCIMB 11846 / Nb-255).